The chain runs to 426 residues: Serine--tRNA ligase (426 aa).

Residue Thr-231–Glu-233 coordinates L-serine. Position 262 to 264 (Arg-262 to Glu-264) interacts with ATP. Residue Glu-285 coordinates L-serine. Glu-349–Ser-352 contributes to the ATP binding site. Position 385 (Ser-385) interacts with L-serine.

The protein belongs to the class-II aminoacyl-tRNA synthetase family. Type-1 seryl-tRNA synthetase subfamily. Homodimer. The tRNA molecule binds across the dimer.

Its subcellular location is the cytoplasm. It catalyses the reaction tRNA(Ser) + L-serine + ATP = L-seryl-tRNA(Ser) + AMP + diphosphate + H(+). It carries out the reaction tRNA(Sec) + L-serine + ATP = L-seryl-tRNA(Sec) + AMP + diphosphate + H(+). It functions in the pathway aminoacyl-tRNA biosynthesis; selenocysteinyl-tRNA(Sec) biosynthesis; L-seryl-tRNA(Sec) from L-serine and tRNA(Sec): step 1/1. Its function is as follows. Catalyzes the attachment of serine to tRNA(Ser). Is also able to aminoacylate tRNA(Sec) with serine, to form the misacylated tRNA L-seryl-tRNA(Sec), which will be further converted into selenocysteinyl-tRNA(Sec). The chain is Serine--tRNA ligase from Saccharophagus degradans (strain 2-40 / ATCC 43961 / DSM 17024).